The primary structure comprises 200 residues: BREX protein BrxA (200 aa).

This sequence belongs to the BrxA family.

BREX systems (bacteriophage exclusion) provide immunity against bacteriophage. Part of a type 1 BREX system. This system allows phage adsorption but prevents phage DNA replication, without degradation of the phage DNA. Methylation of bacterial DNA by PglX probably guides self/non-self discrimination. When the brxA-brxB-brxC-pglX and pglZ-brxL operons are transformed into a susceptible B.subtilis strain (BEST7003) they confer resistance to bacteriophages SPbeta, SP16, Zeta, phi3T and SP02 and partial protection to phages SP01 and SP82G (these include lytic and temperate phage). They do not protect against phages phi105, rho10 or rho14. Additionally confers a very slight reduction in efficiency of plasmid transformation. The sequence is that of BREX protein BrxA from Bacillus cereus (strain H3081.97).